Here is a 564-residue protein sequence, read N- to C-terminus: Glutamyl-tRNA(Gln) amidotransferase subunit B, mitochondrial (564 aa).

The transit peptide at methionine 1–alanine 88 directs the protein to the mitochondrion. The disordered stretch occupies residues proline 26 to histidine 63.

The protein belongs to the GatB/GatE family. GatB subfamily. Subunit of the heterotrimeric GatCAB amidotransferase (AdT) complex, composed of A, B and C subunits.

The protein resides in the mitochondrion. It carries out the reaction L-glutamyl-tRNA(Gln) + L-glutamine + ATP + H2O = L-glutaminyl-tRNA(Gln) + L-glutamate + ADP + phosphate + H(+). Functionally, allows the formation of correctly charged Gln-tRNA(Gln) through the transamidation of misacylated Glu-tRNA(Gln) in the mitochondria. The reaction takes place in the presence of glutamine and ATP through an activated gamma-phospho-Glu-tRNA(Gln). The chain is Glutamyl-tRNA(Gln) amidotransferase subunit B, mitochondrial from Ajellomyces capsulatus (strain G186AR / H82 / ATCC MYA-2454 / RMSCC 2432) (Darling's disease fungus).